A 151-amino-acid chain; its full sequence is Centrin-A (151 aa).

EF-hand domains are found at residues aspartate 80–alanine 115 and arginine 116–tyrosine 151. Ca(2+) contacts are provided by aspartate 93, aspartate 95, serine 97, tyrosine 99, aspartate 104, aspartate 129, asparagine 131, aspartate 133, lysine 135, and glutamate 140.

Belongs to the centrin family.

The protein localises to the cytoplasm. It localises to the cytoskeleton. Its subcellular location is the microtubule organizing center. It is found in the centrosome. The protein resides in the nucleus. Its function is as follows. Plays a fundamental role in microtubule-organizing center structure and function. The chain is Centrin-A (cenA) from Dictyostelium discoideum (Social amoeba).